The chain runs to 392 residues: Formate-dependent phosphoribosylglycinamide formyltransferase (392 aa).

N(1)-(5-phospho-beta-D-ribosyl)glycinamide contacts are provided by residues 22–23 (EL) and Glu-82. Residues Arg-114, Lys-155, 160 to 165 (SSGKGQ), 195 to 198 (EGVV), and Glu-203 contribute to the ATP site. The ATP-grasp domain maps to 119 to 308 (RLAAEELQLP…EFALHVRAFL (190 aa)). Mg(2+) contacts are provided by Glu-267 and Glu-279. Residues Asp-286, Lys-355, and 362-363 (RR) contribute to the N(1)-(5-phospho-beta-D-ribosyl)glycinamide site.

This sequence belongs to the PurK/PurT family. In terms of assembly, homodimer.

It catalyses the reaction N(1)-(5-phospho-beta-D-ribosyl)glycinamide + formate + ATP = N(2)-formyl-N(1)-(5-phospho-beta-D-ribosyl)glycinamide + ADP + phosphate + H(+). It participates in purine metabolism; IMP biosynthesis via de novo pathway; N(2)-formyl-N(1)-(5-phospho-D-ribosyl)glycinamide from N(1)-(5-phospho-D-ribosyl)glycinamide (formate route): step 1/1. In terms of biological role, involved in the de novo purine biosynthesis. Catalyzes the transfer of formate to 5-phospho-ribosyl-glycinamide (GAR), producing 5-phospho-ribosyl-N-formylglycinamide (FGAR). Formate is provided by PurU via hydrolysis of 10-formyl-tetrahydrofolate. The chain is Formate-dependent phosphoribosylglycinamide formyltransferase from Escherichia coli O157:H7.